The primary structure comprises 1450 residues: Arf-GAP with Rho-GAP domain, ANK repeat and PH domain-containing protein 1 (1450 aa).

Positions 6–70 (DAALSVAEWL…LAGLLRAHTS (65 aa)) constitute an SAM domain. Residues 81–90 (PVPMKRHIFR) are required for interaction with SH3KBP1. Disordered regions lie at residues 89–144 (FRSP…LPPL) and 173–302 (TKEE…SSLS). Positions 92-102 (PPVPATPPEPL) are enriched in pro residues. Positions 190–199 (QSEEPLSTLP) are enriched in low complexity. Positions 200–219 (QGPPQPPSPPPCPPEIPPKP) are enriched in pro residues. Composition is skewed to acidic residues over residues 225 to 236 (EFDDSDYDEVPE) and 269 to 286 (EGEE…EDDH). Ser-229 is modified (phosphoserine). Tyr-231 is modified (phosphotyrosine; by PTK6). Residues 327 to 419 (PVIKAGWLDK…WMQALQQAMA (93 aa)) form the PH 1 domain. A Phosphothreonine modification is found at Thr-354. At Ser-428 the chain carries Phosphoserine. Tyr-431 and Tyr-504 each carry phosphotyrosine. The PH 2 domain maps to 440–529 (QPDRAGSLEL…WLEAMQGAIA (90 aa)). The 126-residue stretch at 535–660 (SEVAERIWAA…RYHPLFGNQE (126 aa)) folds into the Arf-GAP domain. The C4-type zinc-finger motif lies at 550–576 (CADCGAPQPDWASINLCVVICKRCAGE). Ser-738 is modified (phosphoserine). Residues 743-850 (TVSHSGFLYK…WVKCIAKAFV (108 aa)) form the PH 3 domain. One can recognise a Rho-GAP domain in the interval 954–1139 (ASMGDTLSEQ…DLINHYVVVF (186 aa)). The Ras-associating domain occupies 1172–1261 (GDFICTVYLE…SHLVVKKHQA (90 aa)). In terms of domain architecture, PH 4 spans 1274–1396 (GDTKHGMMKF…WFATFLFVQH (123 aa)). 2 positions are modified to phosphoserine: Ser-1428 and Ser-1435.

In terms of assembly, interacts with SH3KBP1/CIN85 (via SH3 domains). The interaction is independent of EGF and does not affect ARAP1 GTPase-activating activity but is involved in regulating ubiquitination and endocytic trafficking of EGFR. ARAP1 competes with E3 ubiquitin-protein ligase CBL for binding to SH3KBP1, preventing interaction of CBL with SH3KBP1; this is likely to regulate SH3KBP1-mediated internalization of EGFR. Interacts with TNFRSF10A. In terms of processing, phosphorylated by PTK6 following EGF stimulation which enhances EGFR signaling by delaying EGFR down-regulation; the interaction is mediated by the SH2 domain of PTK6. Phosphorylation promotes association with the Golgi apparatus and endosomes. As to expression, detected in heart, skeletal muscle, spleen, kidney, liver, placenta, lung, peripheral blood leukocytes, adrenal gland, bone marrow, brain, lymph node, mammary gland, prostate, spinal cord, stomach, thyroid and trachea.

Its subcellular location is the cytoplasm. It is found in the golgi apparatus. The protein resides in the trans-Golgi network. It localises to the golgi stack. The protein localises to the cell membrane. Its subcellular location is the endosome. It is found in the multivesicular body. The protein resides in the cell projection. It localises to the ruffle. The protein localises to the podosome. Its subcellular location is the early endosome. Phosphatidylinositol 3,4,5-trisphosphate-dependent GTPase-activating protein that modulates actin cytoskeleton remodeling by regulating ARF and RHO family members. Activated by phosphatidylinositol 3,4,5-trisphosphate (PtdIns(3,4,5)P3) binding and, to a lesser extent, by phosphatidylinositol 3,4-bisphosphate (PtdIns(3,4)P2) binding. Has a preference for ARF1 and ARF5. Positively regulates the ring size of circular dorsal ruffles and promotes macropinocytosis. Acts as a bridging factor in osteoclasts to control actin and membrane dynamics. Regulates the condensing of osteoclast podosomes into sealing zones which segregate the bone-facing membrane from other membrane domains and are required for osteoclast resorption activity. Also regulates recruitment of the AP-3 complex to endosomal membranes and trafficking of lysosomal membrane proteins to the ruffled membrane border of osteoclasts to modulate bone resorption. Regulates the endocytic trafficking of EGFR. Regulates the incorporation of CD63 and CD9 into multivesicular bodies. Required in the retinal pigment epithelium (RPE) for photoreceptor survival due to its role in promoting RPE phagocytosis. The sequence is that of Arf-GAP with Rho-GAP domain, ANK repeat and PH domain-containing protein 1 (ARAP1) from Homo sapiens (Human).